Reading from the N-terminus, the 77-residue chain is Acyl carrier protein (77 aa).

In terms of domain architecture, Carrier spans 2-77; the sequence is SSIEKRVKEI…DAIDYITEHT (76 aa). Ser-37 bears the O-(pantetheine 4'-phosphoryl)serine mark.

It belongs to the acyl carrier protein (ACP) family. 4'-phosphopantetheine is transferred from CoA to a specific serine of apo-ACP by AcpS. This modification is essential for activity because fatty acids are bound in thioester linkage to the sulfhydryl of the prosthetic group.

It localises to the cytoplasm. It participates in lipid metabolism; fatty acid biosynthesis. In terms of biological role, carrier of the growing fatty acid chain in fatty acid biosynthesis. The polypeptide is Acyl carrier protein (Geobacter sulfurreducens (strain ATCC 51573 / DSM 12127 / PCA)).